Here is a 196-residue protein sequence, read N- to C-terminus: Nodulation protein A (196 aa).

Belongs to the NodA family.

The protein resides in the cytoplasm. Functionally, N-acyltransferase required for nodulation. Acts in the production of a small, heat-stable compound (Nod) that stimulates mitosis in various plant protoplasts. The sequence is that of Nodulation protein A from Mesorhizobium plurifarium.